A 351-amino-acid polypeptide reads, in one-letter code: sn-glycerol-3-phosphate import ATP-binding protein UgpC (351 aa).

The ABC transporter domain maps to 4-234 (ITLKDLVKSY…PATLFVAGFI (231 aa)). ATP is bound at residue 36 to 43 (GPSGCGKS).

This sequence belongs to the ABC transporter superfamily. sn-glycerol-3-phosphate importer (TC 3.A.1.1.3) family. As to quaternary structure, the complex is composed of two ATP-binding proteins (UgpC), two transmembrane proteins (UgpA and UgpE) and a solute-binding protein (UgpB).

It localises to the cell inner membrane. It catalyses the reaction sn-glycerol 3-phosphate(out) + ATP + H2O = sn-glycerol 3-phosphate(in) + ADP + phosphate + H(+). Functionally, part of the ABC transporter complex UgpBAEC involved in sn-glycerol-3-phosphate (G3P) import. Responsible for energy coupling to the transport system. The sequence is that of sn-glycerol-3-phosphate import ATP-binding protein UgpC from Ruegeria sp. (strain TM1040) (Silicibacter sp.).